We begin with the raw amino-acid sequence, 382 residues long: Carbamoyl phosphate synthase small chain (382 aa).

The interval 1-189 (MIKSALLVLE…GLPEAKKEDE (189 aa)) is CPSase. L-glutamine is bound by residues Ser-47, Gly-241, and Gly-243. Residues 193-380 (HVVAYDFGAK…IALIEQYRKT (188 aa)) form the Glutamine amidotransferase type-1 domain. Catalysis depends on Cys-269, which acts as the Nucleophile. Residues Leu-270, Gln-273, Asn-311, Gly-313, and Phe-314 each contribute to the L-glutamine site. Active-site residues include His-353 and Glu-355.

This sequence belongs to the CarA family. In terms of assembly, composed of two chains; the small (or glutamine) chain promotes the hydrolysis of glutamine to ammonia, which is used by the large (or ammonia) chain to synthesize carbamoyl phosphate. Tetramer of heterodimers (alpha,beta)4.

The enzyme catalyses hydrogencarbonate + L-glutamine + 2 ATP + H2O = carbamoyl phosphate + L-glutamate + 2 ADP + phosphate + 2 H(+). It catalyses the reaction L-glutamine + H2O = L-glutamate + NH4(+). The protein operates within amino-acid biosynthesis; L-arginine biosynthesis; carbamoyl phosphate from bicarbonate: step 1/1. Its pathway is pyrimidine metabolism; UMP biosynthesis via de novo pathway; (S)-dihydroorotate from bicarbonate: step 1/3. Its function is as follows. Small subunit of the glutamine-dependent carbamoyl phosphate synthetase (CPSase). CPSase catalyzes the formation of carbamoyl phosphate from the ammonia moiety of glutamine, carbonate, and phosphate donated by ATP, constituting the first step of 2 biosynthetic pathways, one leading to arginine and/or urea and the other to pyrimidine nucleotides. The small subunit (glutamine amidotransferase) binds and cleaves glutamine to supply the large subunit with the substrate ammonia. The polypeptide is Carbamoyl phosphate synthase small chain (Escherichia coli O6:H1 (strain CFT073 / ATCC 700928 / UPEC)).